We begin with the raw amino-acid sequence, 263 residues long: uncharacterized protein (263 aa).

The N-terminal stretch at 1–22 (MRYLKRVVLYRIVMVLSVFIIG) is a signal peptide. A lipid anchor (N-palmitoyl cysteine) is attached at Cys23. The S-diacylglycerol cysteine moiety is linked to residue Cys23.

It belongs to the staphylococcal tandem lipoprotein family.

The protein resides in the cell membrane. This is an uncharacterized protein from Staphylococcus aureus (strain bovine RF122 / ET3-1).